A 476-amino-acid polypeptide reads, in one-letter code: Exoglucanase-6A (476 aa).

The first 16 residues, 1–16 (MAKFFLTAAFAAAALA), serve as a signal peptide directing secretion. 2 disulfides stabilise this stretch: Cys-33/Cys-50 and Cys-44/Cys-60. The CBM1 domain occupies 33-60 (CGGIGFNGPTCCQSGSTCVKQNDWYSQC). The tract at residues 67–94 (TTTSTTSTSSSSTTSRATSTTRTGGVTS) is disordered. O-linked (Man...) threonine glycosylation is present at Thr-144. Residue Ser-153 is glycosylated (O-linked (Man...) serine). Substrate-binding residues include Trp-163 and Asp-165. N-linked (GlcNAc...) asparagine glycosylation occurs at Asn-167. The tract at residues 200-222 (YDLPDRDCAAAASNGEWAIANNG) is substrate binding loop 1. The active-site Proton donor is Asp-252. Substrate-binding residues include His-297, Trp-300, Asn-336, Trp-397, Lys-425, and Glu-429. The interval 423-461 (WVKPGGECDGTSDTTAARYDYHCGLEDALKPAPEAGQWF) is substrate binding loop 2. The active-site Proton acceptor is Asp-431.

This sequence belongs to the glycosyl hydrolase 6 (cellulase A) family. Monomer.

It carries out the reaction Hydrolysis of (1-&gt;4)-beta-D-glucosidic linkages in cellulose and cellotetraose, releasing cellobiose from the non-reducing ends of the chains.. Plays a central role in the recycling of plant biomass. The biological conversion of cellulose to glucose generally requires three types of hydrolytic enzymes: (1) Endoglucanases which cut internal beta-1,4-glucosidic bonds; (2) Exocellobiohydrolases that cut the disaccharide cellobiose from the non-reducing end of the cellulose polymer chain; (3) Beta-1,4-glucosidases which hydrolyze the cellobiose and other short cello-oligosaccharides to glucose. The sequence is that of Exoglucanase-6A from Humicola insolens (Soft-rot fungus).